The sequence spans 957 residues: Valine--tRNA ligase (957 aa).

The 'HIGH' region signature appears at 42-52 (PNVTGSLHMGH). A 'KMSKS' region motif is present at residues 554-558 (KMSKS). Residue K557 participates in ATP binding. A coiled-coil region spans residues 890 to 956 (DKDAELARLA…LEAQQETIAA (67 aa)).

It belongs to the class-I aminoacyl-tRNA synthetase family. ValS type 1 subfamily. As to quaternary structure, monomer.

Its subcellular location is the cytoplasm. It catalyses the reaction tRNA(Val) + L-valine + ATP = L-valyl-tRNA(Val) + AMP + diphosphate. Its function is as follows. Catalyzes the attachment of valine to tRNA(Val). As ValRS can inadvertently accommodate and process structurally similar amino acids such as threonine, to avoid such errors, it has a 'posttransfer' editing activity that hydrolyzes mischarged Thr-tRNA(Val) in a tRNA-dependent manner. This is Valine--tRNA ligase from Aliivibrio fischeri (strain ATCC 700601 / ES114) (Vibrio fischeri).